We begin with the raw amino-acid sequence, 457 residues long: MATGKIVQIIGAVIDVEFPQDAVPKVYDALNVETGLVLEVQQQLGGGVVRCIAMGSSDGLKRGLSVTNTNNPISVPVGTKTLGRIMNVLGEPIDEQGEIGAEENWSIHRAPPSYEEQSNSTELLETGIKVIDLVCPFAKGGKVGLFGGAGVGKTVNMMELIRNIAIEHSGYSVFAGVGERTREGNDFYHEMKDSNVLDKVSLVYGQMNEPPGNRLRVALTGLTMAEKFRDEGRDVLFFVDNIYRYTLAGTEVSALLGRMPSAVGYQPTLAEEMGVLQERITSTKTGSITSVQAVYVPADDLTDPSPATTFAHLDSTVVLSRQIASLGIYPAVDPLESTSRQLDPLVVGEEHYNVARGVQTTLQRYKELKDIIAILGMDELSEEDKLVVARARKIERFLSQPFFVAEVFNGTPGKYVPLKETIRGFKGILDGEYDHIPEQAFYMAGTIDEVLEKAKKL.

Gly147 to Thr154 lines the ATP pocket.

This sequence belongs to the ATPase alpha/beta chains family. In terms of assembly, F-type ATPases have 2 components, CF(1) - the catalytic core - and CF(0) - the membrane proton channel. CF(1) has five subunits: alpha(3), beta(3), gamma(1), delta(1), epsilon(1). CF(0) has three main subunits: a(1), b(2) and c(9-12). The alpha and beta chains form an alternating ring which encloses part of the gamma chain. CF(1) is attached to CF(0) by a central stalk formed by the gamma and epsilon chains, while a peripheral stalk is formed by the delta and b chains.

It is found in the cell inner membrane. It catalyses the reaction ATP + H2O + 4 H(+)(in) = ADP + phosphate + 5 H(+)(out). In terms of biological role, produces ATP from ADP in the presence of a proton gradient across the membrane. The catalytic sites are hosted primarily by the beta subunits. In Pasteurella multocida (strain Pm70), this protein is ATP synthase subunit beta.